Here is a 393-residue protein sequence, read N- to C-terminus: CAI-1 autoinducer synthase (393 aa).

Lys240 carries the N6-(pyridoxal phosphate)lysine modification.

It belongs to the class-II pyridoxal-phosphate-dependent aminotransferase family. Pyridoxal 5'-phosphate serves as cofactor.

In terms of biological role, required for the synthesis of the quorum-sensing autoinducer CAI-1 ((S)-3-hydroxytridecan-4-one) which probably functions as an intragenus signal. In Vibrio campbellii (strain ATCC BAA-1116), this protein is CAI-1 autoinducer synthase (cqsA).